A 361-amino-acid polypeptide reads, in one-letter code: 5-formaminoimidazole-4-carboxamide-1-(beta)-D-ribofuranosyl 5'-monophosphate synthetase (361 aa).

Residues His-27 and Ser-94 each coordinate 5-amino-1-(5-phospho-beta-D-ribosyl)imidazole-4-carboxamide. Residues Arg-116–Lys-348 enclose the ATP-grasp domain. Residues Pro-146–Cys-208 and Glu-230 each bind ATP. Asn-258 serves as a coordination point for 5-amino-1-(5-phospho-beta-D-ribosyl)imidazole-4-carboxamide. The Mg(2+) site is built by Gln-297 and Glu-310.

Belongs to the phosphohexose mutase family. Requires Mg(2+) as cofactor. Mn(2+) serves as cofactor.

It carries out the reaction 5-amino-1-(5-phospho-beta-D-ribosyl)imidazole-4-carboxamide + formate + ATP = 5-formamido-1-(5-phospho-D-ribosyl)imidazole-4-carboxamide + ADP + phosphate. It participates in purine metabolism; IMP biosynthesis via de novo pathway; 5-formamido-1-(5-phospho-D-ribosyl)imidazole-4-carboxamide from 5-amino-1-(5-phospho-D-ribosyl)imidazole-4-carboxamide (formate route): step 1/1. Its function is as follows. Catalyzes the ATP- and formate-dependent formylation of 5-aminoimidazole-4-carboxamide-1-beta-d-ribofuranosyl 5'-monophosphate (AICAR) to 5-formaminoimidazole-4-carboxamide-1-beta-d-ribofuranosyl 5'-monophosphate (FAICAR) in the absence of folates. This Methanococcus maripaludis (strain DSM 14266 / JCM 13030 / NBRC 101832 / S2 / LL) protein is 5-formaminoimidazole-4-carboxamide-1-(beta)-D-ribofuranosyl 5'-monophosphate synthetase.